Consider the following 644-residue polypeptide: Anti-sigma-I factor RsgI3 (644 aa).

Over 1–56 (MDNIGVIIKIEGNEAIVMTDDCSFKKVPIKDGMHPGQKILVPNNEVIQKENKSIKR) the chain is Cytoplasmic. Positions 3–50 (NIGVIIKIEGNEAIVMTDDCSFKKVPIKDGMHPGQKILVPNNEVIQKE) constitute a RsgI N-terminal anti-sigma domain. The helical transmembrane segment at 57–77 (ISAVATGIAAVFLMVLSLIWI) threads the bilayer. Residues 78–644 (NKPGRPDGIY…VVPSKNLFAD (567 aa)) are Extracellular-facing. A compositionally biased stretch (polar residues) spans 302-328 (PTNTPSISTKPSATPAENPTPKLTQKP). The tract at residues 302 to 359 (PTNTPSISTKPSATPAENPTPKLTQKPTPVPAKTGERTSTTPTPTPAPTVRNGTGSGL) is disordered. 2 consecutive PA14 domains span residues 354 to 491 (GTGS…PSSQ) and 502 to 640 (KDVN…PSKN).

In terms of assembly, interacts (via RsgI N-terminal anti-sigma domain) with SigI3.

It localises to the cell membrane. Its function is as follows. Anti-sigma factor for SigI3. Negatively regulates SigI3 activity through direct interaction. Binding of the polysaccharide substrate to the extracellular C-terminal sensing domain of RsgI3 may induce a conformational change in its N-terminal cytoplasmic region, leading to the release and activation of SigI3. The polypeptide is Anti-sigma-I factor RsgI3 (Acetivibrio thermocellus (strain ATCC 27405 / DSM 1237 / JCM 9322 / NBRC 103400 / NCIMB 10682 / NRRL B-4536 / VPI 7372) (Clostridium thermocellum)).